The chain runs to 367 residues: Glycolate oxidase 3 (367 aa).

One can recognise an FMN hydroxy acid dehydrogenase domain in the interval M1–D360. Position 25 (Y25) interacts with glyoxylate. FMN-binding positions include P78–A80, S107, Q128–Y130, and T156. Y130 serves as a coordination point for glyoxylate. R165 serves as a coordination point for glyoxylate. The FMN site is built by K231 and S253. 2 residues coordinate glyoxylate: H255 and R258. Residue H255 is the Proton acceptor of the active site. FMN is bound by residues D286–R290 and G309–R310. Positions S365–L367 match the Microbody targeting signal motif.

It belongs to the FMN-dependent alpha-hydroxy acid dehydrogenase family. Homotetramer. The cofactor is FMN.

It localises to the peroxisome. The catalysed reaction is glycolate + O2 = glyoxylate + H2O2. The protein operates within photosynthesis; photorespiration; glycine from 2-phosphoglycolate: step 2/3. Its function is as follows. Catalyzes the oxidation of glycolate to glyoxylate, with a reduction of O2 to H2O2. Is a key enzyme in photorespiration in green plants. The sequence is that of Glycolate oxidase 3 (GLO3) from Oryza sativa subsp. indica (Rice).